We begin with the raw amino-acid sequence, 234 residues long: 7-carboxy-7-deazaguanine synthase (234 aa).

Residues isoleucine 36 to glycine 38 and arginine 51 contribute to the substrate site. The 193-residue stretch at phenylalanine 42–glutamate 234 folds into the Radical SAM core domain. Cysteine 55, cysteine 59, and cysteine 62 together coordinate [4Fe-4S] cluster. Position 64 (threonine 64) interacts with Mg(2+). Threonine 100 is a binding site for substrate. Residues glycine 102, serine 144–lysine 146, and glutamine 195–aspartate 198 contribute to the S-adenosyl-L-methionine site.

The protein belongs to the radical SAM superfamily. 7-carboxy-7-deazaguanine synthase family. As to quaternary structure, homodimer. [4Fe-4S] cluster is required as a cofactor. Requires S-adenosyl-L-methionine as cofactor. The cofactor is Mg(2+).

The catalysed reaction is 6-carboxy-5,6,7,8-tetrahydropterin + H(+) = 7-carboxy-7-deazaguanine + NH4(+). It functions in the pathway purine metabolism; 7-cyano-7-deazaguanine biosynthesis. In terms of biological role, catalyzes the complex heterocyclic radical-mediated conversion of 6-carboxy-5,6,7,8-tetrahydropterin (CPH4) to 7-carboxy-7-deazaguanine (CDG), a step common to the biosynthetic pathways of all 7-deazapurine-containing compounds. This is 7-carboxy-7-deazaguanine synthase from Rickettsia prowazekii (strain Madrid E).